The following is a 490-amino-acid chain: Lignostilbene-alpha,beta-dioxygenase isozyme III (490 aa).

Fe cation is bound by residues histidine 167, histidine 218, histidine 285, and histidine 477.

Belongs to the carotenoid oxygenase family. Homodimer of two beta subunits. Fe(2+) is required as a cofactor.

The enzyme catalyses 1,2-bis(4-hydroxy-3-methoxyphenyl)ethylene + O2 = 2 vanillin. Activity is high with beta-5 type stilbene and minimal with beta-1 type stilbene. A 4-hydroxyl group and trans-stilbene structure is essential for the binding of substrates to the enzyme. Functionally, catalyzes the cleavage of the interphenyl double bond (C alpha-C beta) of lignin-derived polyphenolic diaryl-propane type compounds (Stilbene). The chain is Lignostilbene-alpha,beta-dioxygenase isozyme III from Sphingomonas paucimobilis (Pseudomonas paucimobilis).